Reading from the N-terminus, the 1145-residue chain is Protocadherin-19 (1145 aa).

An N-terminal signal peptide occupies residues 1 to 21 (MESLLLPVLLLLAVLWTQAAA). 6 Cadherin domains span residues 22-129 (LINL…APSF), 130-238 (PAAQ…NPVF), 239-346 (GEST…PPII), 350-453 (SVNS…HPHF), 454-563 (SKPY…TPVI), and 569-672 (INGT…QESM). The Extracellular segment spans residues 22–678 (LINLKYSVEE…QESMGSVNLS (657 aa)). Positions 31, 32, 88, and 90 each coordinate Ca(2+). C93 and C99 are oxidised to a cystine. The Ca(2+) site is built by D121, N123, D124, N125, E140, D155, D157, E199, D212, D230, S231, N232, D233, N234, and E249. N261 carries an N-linked (GlcNAc...) asparagine glycan. Residues D264, D266, N270, D305, E307, D338, N340, D341, N342, E360, D375, D377, N381, D412, and E414 each contribute to the Ca(2+) site. N420 carries N-linked (GlcNAc...) asparagine glycosylation. D427, D445, E446, N447, D448, N449, E464, D479, D481, N485, N522, E524, and D537 together coordinate Ca(2+). N485 is a glycosylation site (N-linked (GlcNAc...) asparagine). The N-linked (GlcNAc...) asparagine glycan is linked to N546. Positions 555, 556, 557, 558, and 559 each coordinate Ca(2+). N-linked (GlcNAc...) asparagine glycosylation occurs at N570. D594, D596, N600, and D646 together coordinate Ca(2+). N676 carries an N-linked (GlcNAc...) asparagine glycan. Residues 679 to 699 (LIFIIALGSIAGILFVTMIFV) form a helical membrane-spanning segment. The Cytoplasmic portion of the chain corresponds to 700–1145 (AIKCKRDNKE…SVKRLKDIVL (446 aa)). Disordered regions lie at residues 901-921 (GNSL…EHDV) and 1094-1145 (LEHH…DIVL). 2 stretches are compositionally biased toward basic and acidic residues: residues 906–921 (DSGH…EHDV) and 1106–1145 (SEAE…DIVL).

In terms of assembly, homodimer; antiparallel.

Its subcellular location is the cell membrane. Functionally, calcium-dependent cell-adhesion protein. The sequence is that of Protocadherin-19 (Pcdh19) from Mus musculus (Mouse).